The following is a 421-amino-acid chain: Alpha-1-antitrypsin (421 aa).

The signal sequence occupies residues 1–24 (MASSSTWGLLLLAGLCCLVPISLA). N-linked (GlcNAc...) asparagine glycosylation is found at Asn73 and Asn110. The interval 376-395 (GATILEAIPMSIPPNVKFNK) is RCL. Ser386 carries the post-translational modification Phosphoserine.

The protein belongs to the serpin family. In terms of assembly, interacts with CELA2A. Interacts with ERGIC3 and LMAN1/ERGIC53. Interacts with PRSS1/Trypsin.

The protein localises to the secreted. Inhibitor of serine proteases. Its primary target is elastase, but it also has a moderate affinity for plasmin and thrombin. This chain is Alpha-1-antitrypsin (SERPINA1), found in Sus scrofa (Pig).